The primary structure comprises 490 residues: MDHTDNELQGTNSSGSLGGLDVRRRIPIKLISKQANKAKPAPRTQRTINRMPAKAPPGDEGFDYNEEERYDCKGGELFGNQRRFPGHLFWDFQINILGEKDDTPVHFCDKCGLPIKIYGRMIPCKHVFCYDCAILHEKKGDKMCPGCSDPVQRIEQCTRGSLFMCSIVQGCKRTYLSQRDLQAHINHRHMRAGKPVTRASLENVHPPIAPPPTEIPERFIMPPDKHHMSHIPPKQHIMMPPPPLQHVPHEHYNQPHEDIRAPPAELSMAPPPPRSVSQETFRISTRKHSNLITVPIQDDSNSGAREPPPPAPAPAHHHPEYQGQPVVSHPHHIMPPQQHYAPPPPPPPPISHPMPHPPQAAGTPHLVYSQAPPPPMTSAPPPITPPPGHIIAQMPPYMNHPPPGPPPPQHGGPPVTAPPPHHYNPNSLPQFTEDQGTLSPPFTQPGGMSPGIWPAPRGPPPPPRLQGPPSQTPLPGPHHPDQTRYRPYYQ.

Positions 34–60 are disordered; the sequence is QANKAKPAPRTQRTINRMPAKAPPGDE. The segment at 108–148 adopts an RING-type zinc-finger fold; that stretch reads CDKCGLPIKIYGRMIPCKHVFCYDCAILHEKKGDKMCPGCS. Positions 147-205 are HYB domain; it reads CSDPVQRIEQCTRGSLFMCSIVQGCKRTYLSQRDLQAHINHRHMRAGKPVTRASLENVH. A C2H2-type zinc finger spans residues 163–189; the sequence is FMCSIVQGCKRTYLSQRDLQAHINHRH. A phosphoserine mark is found at serine 200, serine 284, and serine 289. The tract at residues 254-490 is disordered; that stretch reads QPHEDIRAPP…DQTRYRPYYQ (237 aa). 3 stretches are compositionally biased toward pro residues: residues 341 to 358, 371 to 388, and 398 to 422; these read APPP…PHPP, APPP…PPPG, and MNHP…PPHH. Residues 426 to 441 are compositionally biased toward polar residues; it reads NSLPQFTEDQGTLSPP. Pro residues predominate over residues 456–477; the sequence is PRGPPPPPRLQGPPSQTPLPGP.

This sequence belongs to the Hakai family. As to quaternary structure, homodimer. Interacts with tyrosine-phosphorylated SRC substrates. Component of the WMM complex, a N6-methyltransferase complex composed of a catalytic subcomplex, named MAC, and of an associated subcomplex, named MACOM. The MAC subcomplex is composed of METTL3 and METTL14. The MACOM subcomplex is composed of WTAP, ZC3H13, CBLL1/HAKAI, VIRMA, and, in some cases of RBM15 (RBM15 or RBM15B). Also a component of a MACOM-like complex, named WTAP complex, composed of WTAP, ZC3H13, CBLL1, VIRMA, RBM15, BCLAF1 and THRAP3. In terms of processing, phosphorylated on tyrosine residues.

It is found in the nucleus speckle. Its subcellular location is the nucleus. The protein localises to the nucleoplasm. It localises to the cytoplasm. The catalysed reaction is S-ubiquitinyl-[E2 ubiquitin-conjugating enzyme]-L-cysteine + [acceptor protein]-L-lysine = [E2 ubiquitin-conjugating enzyme]-L-cysteine + N(6)-ubiquitinyl-[acceptor protein]-L-lysine.. Its pathway is protein modification; protein ubiquitination. Its function is as follows. E3 ubiquitin-protein ligase that mediates ubiquitination of several tyrosine-phosphorylated Src substrates, including CDH1, CTTN and DOK1. Targets CDH1 for endocytosis and degradation. Associated component of the WMM complex, a complex that mediates N6-methyladenosine (m6A) methylation of RNAs, a modification that plays a role in the efficiency of mRNA splicing and RNA processing. Its function in the WMM complex is unknown. This chain is E3 ubiquitin-protein ligase Hakai, found in Macaca fascicularis (Crab-eating macaque).